The primary structure comprises 347 residues: tRNA N6-adenosine threonylcarbamoyltransferase (347 aa).

H110 and H114 together coordinate Fe cation. Residues 133–137 (VVSGG), D168, G181, D185, and N277 contribute to the substrate site. Fe cation is bound at residue D305.

Belongs to the KAE1 / TsaD family. Fe(2+) is required as a cofactor.

Its subcellular location is the cytoplasm. It catalyses the reaction L-threonylcarbamoyladenylate + adenosine(37) in tRNA = N(6)-L-threonylcarbamoyladenosine(37) in tRNA + AMP + H(+). Functionally, required for the formation of a threonylcarbamoyl group on adenosine at position 37 (t(6)A37) in tRNAs that read codons beginning with adenine. Is involved in the transfer of the threonylcarbamoyl moiety of threonylcarbamoyl-AMP (TC-AMP) to the N6 group of A37, together with TsaE and TsaB. TsaD likely plays a direct catalytic role in this reaction. The chain is tRNA N6-adenosine threonylcarbamoyltransferase from Kineococcus radiotolerans (strain ATCC BAA-149 / DSM 14245 / SRS30216).